A 573-amino-acid polypeptide reads, in one-letter code: Adenine deaminase 2 (573 aa).

This sequence belongs to the metallo-dependent hydrolases superfamily. Adenine deaminase family. It depends on Mn(2+) as a cofactor.

The catalysed reaction is adenine + H2O + H(+) = hypoxanthine + NH4(+). The polypeptide is Adenine deaminase 2 (Shouchella clausii (strain KSM-K16) (Alkalihalobacillus clausii)).